Reading from the N-terminus, the 181-residue chain is Oligoribonuclease (181 aa).

Positions 8-171 constitute an Exonuclease domain; that stretch reads LIWIDLEMTG…DDIRESVAEL (164 aa). Y129 is an active-site residue.

Belongs to the oligoribonuclease family.

It is found in the cytoplasm. 3'-to-5' exoribonuclease specific for small oligoribonucleotides. In Shigella flexneri, this protein is Oligoribonuclease.